Here is a 153-residue protein sequence, read N- to C-terminus: Ribosomal RNA large subunit methyltransferase H (153 aa).

Residues L70, G102, and 121–126 each bind S-adenosyl-L-methionine; that span reads LSSMTF.

It belongs to the RNA methyltransferase RlmH family. Homodimer.

Its subcellular location is the cytoplasm. The enzyme catalyses pseudouridine(1915) in 23S rRNA + S-adenosyl-L-methionine = N(3)-methylpseudouridine(1915) in 23S rRNA + S-adenosyl-L-homocysteine + H(+). Functionally, specifically methylates the pseudouridine at position 1915 (m3Psi1915) in 23S rRNA. This Dictyoglomus thermophilum (strain ATCC 35947 / DSM 3960 / H-6-12) protein is Ribosomal RNA large subunit methyltransferase H.